The sequence spans 128 residues: Saitohin (128 aa).

A compositionally biased stretch (polar residues) spans 77 to 87 (SYSSEENSRNG). Positions 77–128 (SYSSEENSRNGAEQGRQLSIEGPFQGQNCPSHPAAALPLPMRGESQATSCQV) are disordered.

As to quaternary structure, interacts with PRDX6.

Its subcellular location is the cytoplasm. The protein resides in the nucleus. This is Saitohin (STH) from Pan troglodytes (Chimpanzee).